Reading from the N-terminus, the 109-residue chain is Movement protein TGB2 (109 aa).

Topologically, residues 1-9 (MPLTPPPDF) are cytoplasmic. The helical transmembrane segment at 10 to 30 (TKVYLSAALGVSLALVVWLLI) threads the bilayer. Topologically, residues 31–72 (RSTLPVVGDRDHNLPHGGWYRDGTKSVFYNSPGRLNSIEARK) are lumenal. Residues 73 to 93 (APLLGQPWAIVVLLVLLIWAS) traverse the membrane as a helical segment. Topologically, residues 94 to 109 (HKLGRPNCRACAGSHT) are cytoplasmic.

This sequence belongs to the Tymovirales TGBp2 protein family.

The protein localises to the host endoplasmic reticulum membrane. In terms of biological role, plays a role in viral cell-to-cell propagation, by facilitating genome transport to neighboring plant cells through plasmosdesmata,. This Solanum tuberosum (Potato) protein is Movement protein TGB2.